Reading from the N-terminus, the 1452-residue chain is Arf-GAP with Rho-GAP domain, ANK repeat and PH domain-containing protein 1 (1452 aa).

In terms of domain architecture, SAM spans 6-70 (DAALSVAEWL…LAGLHRAHAP (65 aa)). The interval 81–90 (PVPMKRHIFR) is required for interaction with SH3KBP1. 2 disordered regions span residues 87–258 (HIFR…LPSR) and 271–304 (EGEE…LNPP). Pro residues-rich tracts occupy residues 92-104 (PPVP…PPPT), 154-167 (SVPP…PPYP), and 205-225 (PLQP…PPRL). Composition is skewed to acidic residues over residues 228-239 (EFDDSDYDDVPE) and 271-286 (EGEE…DDDH). Serine 232 is subject to Phosphoserine. A Phosphotyrosine; by PTK6 modification is found at tyrosine 234. Residues 329–421 (PVIKAGWLDK…WMQALQQAVV (93 aa)) enclose the PH 1 domain. Serine 430 bears the Phosphoserine mark. The PH 2 domain maps to 442–531 (QPDRAGSLEL…WLEAMQGAIA (90 aa)). Position 506 is a phosphotyrosine (tyrosine 506). The Arf-GAP domain occupies 537–662 (SEVAERIWAA…RYHPLFGNQE (126 aa)). Residues 552–575 (CADCGAAQPDWASINLCVVICKRC) form a C4-type zinc finger. Serine 740 bears the Phosphoserine mark. Positions 745–852 (TVSHSGFLYK…WVKCIAKAFV (108 aa)) constitute a PH 3 domain. Residues 956-1141 (ASLGDTLSEQ…DLINHYVVVF (186 aa)) enclose the Rho-GAP domain. One can recognise a Ras-associating domain in the interval 1174–1263 (GDFICTVYLE…SHLVVKKYQS (90 aa)). The PH 4 domain occupies 1276-1398 (GDTKHGMMKF…WFATFLSVQH (123 aa)). Phosphoserine is present on residues serine 1430 and serine 1437.

Interacts with SH3KBP1/CIN85 (via SH3 domains). The interaction is independent of EGF and does not affect ARAP1 GTPase-activating activity but is involved in regulating ubiquitination and endocytic trafficking of EGFR. ARAP1 competes with E3 ubiquitin-protein ligase CBL for binding to SH3KBP1, preventing interaction of CBL with SH3KBP1; this is likely to regulate SH3KBP1-mediated internalization of EGFR. Interacts with TNFRSF10A. Post-translationally, phosphorylated by PTK6 following EGF stimulation which enhances EGFR signaling by delaying EGFR down-regulation; the interaction is mediated by the SH2 domain of PTK6. Phosphorylation promotes association with the Golgi apparatus and endosomes. Expressed in the retina where it is detected in Mueller glia (at protein level). Also detected in the retinal pigment epithelium (at protein level). Expressed in osteoclasts (at protein level).

The protein resides in the cytoplasm. It is found in the golgi apparatus. Its subcellular location is the trans-Golgi network. The protein localises to the golgi stack membrane. It localises to the cell membrane. The protein resides in the endosome. It is found in the multivesicular body. Its subcellular location is the cell projection. The protein localises to the ruffle. It localises to the podosome. The protein resides in the early endosome. In terms of biological role, phosphatidylinositol 3,4,5-trisphosphate-dependent GTPase-activating protein that modulates actin cytoskeleton remodeling by regulating ARF and RHO family members. Activated by phosphatidylinositol 3,4,5-trisphosphate (PtdIns(3,4,5)P3) binding and, to a lesser extent, by phosphatidylinositol 3,4-bisphosphate (PtdIns(3,4)P2) binding. Has a preference for ARF1 and ARF5. Positively regulates the ring size of circular dorsal ruffles and promotes macropinocytosis. Acts as a bridging factor in osteoclasts to control actin and membrane dynamics. Regulates the condensing of osteoclast podosomes into sealing zones which segregate the bone-facing membrane from other membrane domains and are required for osteoclast resorption activity. Also regulates recruitment of the AP-3 complex to endosomal membranes and trafficking of lysosomal membrane proteins to the ruffled membrane border of osteoclasts to modulate bone resorption. Regulates the endocytic trafficking of EGFR. Regulates the incorporation of CD63 and CD9 into multivesicular bodies. Required in the retinal pigment epithelium (RPE) for photoreceptor survival due to its role in promoting RPE phagocytosis. The polypeptide is Arf-GAP with Rho-GAP domain, ANK repeat and PH domain-containing protein 1 (Mus musculus (Mouse)).